The primary structure comprises 337 residues: Holliday junction branch migration complex subunit RuvB (337 aa).

The interval 1–27 is disordered; sequence MIEADRLVHAQPQGTEERDEQIDRAMR. A large ATPase domain (RuvB-L) region spans residues 4–187; it reads ADRLVHAQPQ…FGIPLRLEFY (184 aa). ATP-binding positions include R27, G68, K71, T72, T73, 134–136, R177, Y187, and R224; that span reads EDY. T72 is a binding site for Mg(2+). Residues 188-258 form a small ATPAse domain (RuvB-S) region; sequence NVKDLSSIVT…VAESALDMLD (71 aa). Positions 261–337 are head domain (RuvB-H); the sequence is VEGFDYMDRK…YQHFNLIQPE (77 aa). Residues R297, R316, and R321 each contribute to the DNA site.

Belongs to the RuvB family. As to quaternary structure, homohexamer. Forms an RuvA(8)-RuvB(12)-Holliday junction (HJ) complex. HJ DNA is sandwiched between 2 RuvA tetramers; dsDNA enters through RuvA and exits via RuvB. An RuvB hexamer assembles on each DNA strand where it exits the tetramer. Each RuvB hexamer is contacted by two RuvA subunits (via domain III) on 2 adjacent RuvB subunits; this complex drives branch migration. In the full resolvosome a probable DNA-RuvA(4)-RuvB(12)-RuvC(2) complex forms which resolves the HJ.

Its subcellular location is the cytoplasm. It carries out the reaction ATP + H2O = ADP + phosphate + H(+). Functionally, the RuvA-RuvB-RuvC complex processes Holliday junction (HJ) DNA during genetic recombination and DNA repair, while the RuvA-RuvB complex plays an important role in the rescue of blocked DNA replication forks via replication fork reversal (RFR). RuvA specifically binds to HJ cruciform DNA, conferring on it an open structure. The RuvB hexamer acts as an ATP-dependent pump, pulling dsDNA into and through the RuvAB complex. RuvB forms 2 homohexamers on either side of HJ DNA bound by 1 or 2 RuvA tetramers; 4 subunits per hexamer contact DNA at a time. Coordinated motions by a converter formed by DNA-disengaged RuvB subunits stimulates ATP hydrolysis and nucleotide exchange. Immobilization of the converter enables RuvB to convert the ATP-contained energy into a lever motion, pulling 2 nucleotides of DNA out of the RuvA tetramer per ATP hydrolyzed, thus driving DNA branch migration. The RuvB motors rotate together with the DNA substrate, which together with the progressing nucleotide cycle form the mechanistic basis for DNA recombination by continuous HJ branch migration. Branch migration allows RuvC to scan DNA until it finds its consensus sequence, where it cleaves and resolves cruciform DNA. This Shewanella loihica (strain ATCC BAA-1088 / PV-4) protein is Holliday junction branch migration complex subunit RuvB.